The primary structure comprises 679 residues: Penicillin-binding protein 1A (679 aa).

Positions 1–14 are enriched in basic residues; it reads MTERKREHKDRKQN. The interval 1–20 is disordered; sequence MTERKREHKDRKQNKNSPKN. Residues 1 to 30 are Cytoplasmic-facing; the sequence is MTERKREHKDRKQNKNSPKNQSKVTKFLKW. A helical; Signal-anchor for type II membrane protein membrane pass occupies residues 31–51; the sequence is FFIGILLLGITAVTVVGIYVL. At 52–679 the chain is on the extracellular side; the sequence is SIIRSSPELD…QYKEVDNLVE (628 aa). The transglycosylase stretch occupies residues 72-244; it reads SILYDDQGNF…PTSYDGLSEA (173 aa). Glu-111 acts as the Proton donor; for transglycosylase activity in catalysis. The tract at residues 378–663 is transpeptidase; it reads ASATIIDYKT…TSPIFGKIMG (286 aa). Residue Ser-417 is the Acyl-ester intermediate; for transpeptidase activity of the active site.

The protein in the N-terminal section; belongs to the glycosyltransferase 51 family. This sequence in the C-terminal section; belongs to the transpeptidase family.

Its subcellular location is the cell membrane. It catalyses the reaction [GlcNAc-(1-&gt;4)-Mur2Ac(oyl-L-Ala-gamma-D-Glu-L-Lys-D-Ala-D-Ala)](n)-di-trans,octa-cis-undecaprenyl diphosphate + beta-D-GlcNAc-(1-&gt;4)-Mur2Ac(oyl-L-Ala-gamma-D-Glu-L-Lys-D-Ala-D-Ala)-di-trans,octa-cis-undecaprenyl diphosphate = [GlcNAc-(1-&gt;4)-Mur2Ac(oyl-L-Ala-gamma-D-Glu-L-Lys-D-Ala-D-Ala)](n+1)-di-trans,octa-cis-undecaprenyl diphosphate + di-trans,octa-cis-undecaprenyl diphosphate + H(+). The catalysed reaction is Preferential cleavage: (Ac)2-L-Lys-D-Ala-|-D-Ala. Also transpeptidation of peptidyl-alanyl moieties that are N-acyl substituents of D-alanine.. Its pathway is cell wall biogenesis; peptidoglycan biosynthesis. Functionally, cell wall formation. Synthesis of cross-linked peptidoglycan from the lipid intermediates. The enzyme has a penicillin-insensitive transglycosylase N-terminal domain (formation of linear glycan strands) and a penicillin-sensitive transpeptidase C-terminal domain (cross-linking of the peptide subunits). This is Penicillin-binding protein 1A (pbpA) from Clostridium perfringens (strain 13 / Type A).